Reading from the N-terminus, the 511-residue chain is 2-isopropylmalate synthase (511 aa).

The Pyruvate carboxyltransferase domain occupies 6–269; that stretch reads IIIFDTTLRD…YTDIKCENIF (264 aa). The Mn(2+) site is built by D15, H203, H205, and N239. The tract at residues 394–511 is regulatory domain; that stretch reads VIEKLSVISG…SLKVEERKMA (118 aa).

Belongs to the alpha-IPM synthase/homocitrate synthase family. LeuA type 1 subfamily. As to quaternary structure, homodimer. Requires Mn(2+) as cofactor.

The protein localises to the cytoplasm. The enzyme catalyses 3-methyl-2-oxobutanoate + acetyl-CoA + H2O = (2S)-2-isopropylmalate + CoA + H(+). It participates in amino-acid biosynthesis; L-leucine biosynthesis; L-leucine from 3-methyl-2-oxobutanoate: step 1/4. Catalyzes the condensation of the acetyl group of acetyl-CoA with 3-methyl-2-oxobutanoate (2-ketoisovalerate) to form 3-carboxy-3-hydroxy-4-methylpentanoate (2-isopropylmalate). This chain is 2-isopropylmalate synthase, found in Campylobacter jejuni (strain RM1221).